A 470-amino-acid polypeptide reads, in one-letter code: FLYWCH transcription factor 2 (470 aa).

Positions 102 to 148 (SQLISEDTRPSASSSPSSTATAVSNSGQSNATSTSSSSTEPEYKPRN) are disordered. The segment covering 111–140 (PSASSSPSSTATAVSNSGQSNATSTSSSST) has biased composition (low complexity). Residues 145–204 (KPRNVREKVYADGYIMSFDKKSCCGTKEFWRCERKNDCNARMHSDINTREIVRKLHPHNH) form an FLYWCH-type zinc finger.

Functionally, probable transcription factor. May bind to the promoters of target genes, including micro-RNA genes, in order to repress expression, and acting redundantly with flh-1 and flh-3. The sequence is that of FLYWCH transcription factor 2 from Caenorhabditis elegans.